A 357-amino-acid chain; its full sequence is Protein RecA (357 aa).

67–74 (GPESSGKT) is an ATP binding site.

Belongs to the RecA family.

Its subcellular location is the cytoplasm. Its function is as follows. Can catalyze the hydrolysis of ATP in the presence of single-stranded DNA, the ATP-dependent uptake of single-stranded DNA by duplex DNA, and the ATP-dependent hybridization of homologous single-stranded DNAs. It interacts with LexA causing its activation and leading to its autocatalytic cleavage. This is Protein RecA from Shewanella oneidensis (strain ATCC 700550 / JCM 31522 / CIP 106686 / LMG 19005 / NCIMB 14063 / MR-1).